The following is a 282-amino-acid chain: Probable endonuclease 4 (282 aa).

9 residues coordinate Zn(2+): His69, His109, Glu144, Asp178, His181, His215, Asp228, His230, and Glu260.

This sequence belongs to the AP endonuclease 2 family. It depends on Zn(2+) as a cofactor.

It carries out the reaction Endonucleolytic cleavage to 5'-phosphooligonucleotide end-products.. Its function is as follows. Endonuclease IV plays a role in DNA repair. It cleaves phosphodiester bonds at apurinic or apyrimidinic (AP) sites, generating a 3'-hydroxyl group and a 5'-terminal sugar phosphate. This is Probable endonuclease 4 from Thermosipho africanus (strain TCF52B).